We begin with the raw amino-acid sequence, 311 residues long: Meteorin-like protein (311 aa).

A compositionally biased stretch (low complexity) spans 1–13 (MRGAARAAWGRAG). Positions 1 to 24 (MRGAARAAWGRAGQPWPRPPAPGP) are disordered. Residues 1–45 (MRGAARAAWGRAGQPWPRPPAPGPPPPPLPLLLLLLAGLLGGAGA) form the signal peptide. Cystine bridges form between C52–C75, C107–C143, C188–C260, C191–C284, and C201–C306.

The protein belongs to the meteorin family. Highly expressed in the skeletal muscle, in subcutaneous adipose tissue, epididymal white adipose tissue depots and heart. Also expressed in brown adipose tissues and kidney.

It localises to the secreted. Hormone induced following exercise or cold exposure that promotes energy expenditure. Induced either in the skeletal muscle after exercise or in adipose tissue following cold exposure and is present in the circulation. Able to stimulate energy expenditure associated with the browning of the white fat depots and improves glucose tolerance. Does not promote an increase in a thermogenic gene program via direct action on adipocytes, but acts by stimulating several immune cell subtypes to enter the adipose tissue and activate their prothermogenic actions. Stimulates an eosinophil-dependent increase in IL4 expression and promotes alternative activation of adipose tissue macrophages, which are required for the increased expression of the thermogenic and anti-inflammatory gene programs in fat. Required for some cold-induced thermogenic responses, suggesting a role in metabolic adaptations to cold temperatures. This Homo sapiens (Human) protein is Meteorin-like protein (METRNL).